The primary structure comprises 334 residues: Petrobactin import system permease protein FatD (334 aa).

9 helical membrane passes run 24 to 44 (FIIAIIVVIILGIISLFTGVY), 64 to 84 (TVALMLTGAAMAMAGLVMQLI), 98 to 118 (IEWSSLGLLFVYLLFPAPTLV), 119 to 139 (QRMTGAIIFSFIGTMIFFLFL), 152 to 172 (IIGLMLGAVISAVSTFLGLLF), 197 to 217 (LWLIVIVTLLIFMYANRLTLA), 234 to 254 (IVLFGTALISVAVGIVAAVIG), 277 to 297 (SNLPWVCVIGMGTITACDIIS), and 304 to 324 (FELPVSLILASVGAVVFITIL).

This sequence belongs to the binding-protein-dependent transport system permease family. FecCD subfamily. In terms of assembly, the complex is composed of two ATP-binding proteins (FatE), two transmembrane proteins (FatC and FatD) and a solute-binding protein (FpuA).

The protein localises to the cell membrane. In terms of biological role, part of an ABC transporter complex involved in ferric-petrobactin uptake. Probably responsible for the translocation of the substrate across the membrane. This chain is Petrobactin import system permease protein FatD, found in Bacillus anthracis.